The following is a 247-amino-acid chain: MSFKKAQSHFFLKNPERVRSLQKLSKKIGIKFSKVEYYNTAFIHSSYKNENQEILEDNERLEFLGDSVLGLVAARSLFRKYPKANEGELSRIKSRIVSTPILNSISEKLELSEYLLLGKGEKNSLGKGRRKLSANLFESLVGAIYLDQGFEIAEKFILRHLSEFVENPEKEESVRDYKTQLQEYSQKHFKILPIYRTKSESGPDHAKTFQVVVRIRDQWEASGSGVSKKSAEQNAAKELYNRIRKKT.

An RNase III domain is found at 21 to 149; that stretch reads LQKLSKKIGI…LVGAIYLDQG (129 aa). Glu-62 is a binding site for Mg(2+). Asp-66 is a catalytic residue. The Mg(2+) site is built by Asn-135 and Glu-138. The active site involves Glu-138. One can recognise a DRBM domain in the interval 176–245; it reads DYKTQLQEYS…AKELYNRIRK (70 aa).

This sequence belongs to the ribonuclease III family. Homodimer. Mg(2+) serves as cofactor.

Its subcellular location is the cytoplasm. It carries out the reaction Endonucleolytic cleavage to 5'-phosphomonoester.. Its function is as follows. Digests double-stranded RNA. Involved in the processing of primary rRNA transcript to yield the immediate precursors to the large and small rRNAs (23S and 16S). Processes some mRNAs, and tRNAs when they are encoded in the rRNA operon. Processes pre-crRNA and tracrRNA of type II CRISPR loci if present in the organism. This chain is Ribonuclease 3, found in Leptospira interrogans serogroup Icterohaemorrhagiae serovar copenhageni (strain Fiocruz L1-130).